The following is a 713-amino-acid chain: Zinc finger and BTB domain-containing protein 1 (713 aa).

Residue K3 forms a Glycyl lysine isopeptide (Lys-Gly) (interchain with G-Cter in SUMO2) linkage. A BTB domain is found at 24-91; sequence CDCCIAIDDI…MYLGKIMTAP (68 aa). Glycyl lysine isopeptide (Lys-Gly) (interchain with G-Cter in SUMO2) cross-links involve residues K200 and K205. The segment at 216–242 adopts a C2H2-type 1; atypical zinc-finger fold; sequence FTCDSCGFGFSCEKLLDEHVLTCTNRH. Residues K261, K266, K276, K284, K304, K316, K328, K340, and K346 each participate in a glycyl lysine isopeptide (Lys-Gly) (interchain with G-Cter in SUMO2) cross-link. Residues 270–319 are disordered; it reads AEKDSSKTFSAQPDKYREDANQAPDDSASTTGSRKSTVEAGIAGEEKSRA. Phosphoserine is present on S355. Position 356 is a phosphothreonine (T356). A Glycyl lysine isopeptide (Lys-Gly) (interchain with G-Cter in SUMO2) cross-link involves residue K381. Residues 448-470 form a C2H2-type 2; atypical zinc finger; it reads CACGKCGQILVKGRQLQEHAQRC. K528 is covalently cross-linked (Glycyl lysine isopeptide (Lys-Gly) (interchain with G-Cter in SUMO2)). A UBZ-type zinc finger spans residues 533 to 558; the sequence is PFRCPNCGQRFETENLVVEHMSSCLD. K563 is covalently cross-linked (Glycyl lysine isopeptide (Lys-Gly) (interchain with G-Cter in SUMO2)). 5 consecutive C2H2-type zinc fingers follow at residues 578-600, 606-628, 634-656, 662-684, and 686-709; these read HFCNLCGKGFYQRCHLREHYTVH, FVCQTCGKQFLRERQLRLHNDMH, YVCSICDQGNFRKHDHVRHMISH, TICQVCFQIFPNNEQLEQHMDVH, and YTCGICGAKFNLRKDMRSHYNAKH.

As to quaternary structure, homodimer. Homodimer. Interacts (via BTB domain) with TRIM28 (unphosphorylated or phosphorylated form). Sumoylated with SUMO2 at Lys-328 and to a lesser extent at Lys-266. Sumoylation inhibits its transcriptional repression activity and regulates its subcellular localization. As to expression, expressed strongly in thymus and spleen, less in lymph nodes and peripheral blood mononuclear cells (PBMCs) and weakly in bone marrow. Strongly expressed in immature, but weakly in mature bone marrow-lymphocyte B.

Its subcellular location is the nucleus. The protein localises to the nucleoplasm. Its function is as follows. Acts as a transcriptional repressor. Represses cAMP-responsive element (CRE)-mediated transcriptional activation. In addition, has a role in translesion DNA synthesis. Requires for UV-inducible RAD18 loading, PCNA monoubiquitination, POLH recruitment to replication factories and efficient translesion DNA synthesis. Plays a key role in the transcriptional regulation of T lymphocyte development. The polypeptide is Zinc finger and BTB domain-containing protein 1 (Zbtb1) (Mus musculus (Mouse)).